A 450-amino-acid polypeptide reads, in one-letter code: tRNA modification GTPase MnmE (450 aa).

Positions 23, 80, and 123 each coordinate (6S)-5-formyl-5,6,7,8-tetrahydrofolate. One can recognise a TrmE-type G domain in the interval 219–372; the sequence is GLHVVLAGKP…LRQRLLQLAG (154 aa). Asn229 contacts K(+). GTP-binding positions include 229-234, 248-254, 273-276, and 353-355; these read NVGKSS, TPIAGTT, DTAG, and SAR. Residue Ser233 coordinates Mg(2+). Residues Thr248, Ile250, and Thr253 each coordinate K(+). Thr254 serves as a coordination point for Mg(2+). Lys450 lines the (6S)-5-formyl-5,6,7,8-tetrahydrofolate pocket.

It belongs to the TRAFAC class TrmE-Era-EngA-EngB-Septin-like GTPase superfamily. TrmE GTPase family. Homodimer. Heterotetramer of two MnmE and two MnmG subunits. The cofactor is K(+).

The protein localises to the cytoplasm. Its function is as follows. Exhibits a very high intrinsic GTPase hydrolysis rate. Involved in the addition of a carboxymethylaminomethyl (cmnm) group at the wobble position (U34) of certain tRNAs, forming tRNA-cmnm(5)s(2)U34. This chain is tRNA modification GTPase MnmE, found in Bordetella bronchiseptica (strain ATCC BAA-588 / NCTC 13252 / RB50) (Alcaligenes bronchisepticus).